A 108-amino-acid polypeptide reads, in one-letter code: L-rhamnose mutarotase (108 aa).

Substrate is bound at residue Tyr18. The Proton donor role is filled by His22. Residues Tyr41 and 76–77 (WW) contribute to the substrate site.

The protein belongs to the rhamnose mutarotase family. As to quaternary structure, homodimer.

Its subcellular location is the cytoplasm. The catalysed reaction is alpha-L-rhamnose = beta-L-rhamnose. It functions in the pathway carbohydrate metabolism; L-rhamnose metabolism. Functionally, involved in the anomeric conversion of L-rhamnose. The sequence is that of L-rhamnose mutarotase from Paraburkholderia phymatum (strain DSM 17167 / CIP 108236 / LMG 21445 / STM815) (Burkholderia phymatum).